Consider the following 553-residue polypeptide: MAAVSLRLGDLVWGKLGRYPPWPGKIVNPPKDLKKPRGKKCFFVKFFGTEDHAWIKVEQLKPYHAHKEEMIKINKGKRFQQAVDAVEEFLRRAKGKDQTSSHSSADDKNRRNSSEERSRPISGDEKRKLSLSEGKVKKNMGEGKKRVPSGSSERGSKSPLKRAQEQSPRKRGRPPKDEKDLSIPESSTVKGMMAGPMATFKWQPNVSEPVKDADPHFHHFLLSQTEKPAVCYQAITKKLKICEEETGSTSIQAADSTAVNGSVTPTDKKIGFLGLGLMGSGIVSNLLKMGHTVTVWNRTAEKCDLFIQEGARLGRTPAEVVSTCDITFACVSDPKAAKDLVLGPSGVLQGIRPGKCYVDMSTVDADTVTELAQVIVSRGGRFLEAPVSGNQQLSNDGMLVILAAGDRGLYEDCSSCFQAMGKTSFFLGEVGNAAKMMLIVNMVQGSFMATIAEGLTLAQVTGQSQQTLLDILNQGQLASIFLDQKCQNILQGNFKPDFYLKYIQKDLRLAIALGDAVNHPTPMAAAANEVYKRAKALDQSDNDMSAVYRAYIH.

A PWWP domain is found at 8–66; it reads LGDLVWGKLGRYPPWPGKIVNPPKDLKKPRGKKCFFVKFFGTEDHAWIKVEQLKPYHAH. Composition is skewed to basic and acidic residues over residues 92–145 and 162–182; these read RAKG…EGKK and RAQEQSPRKRGRPPKDEKDLS. Residues 92-190 are disordered; the sequence is RAKGKDQTSS…LSIPESSTVK (99 aa). A Phosphoserine modification is found at Ser-130. A Glycyl lysine isopeptide (Lys-Gly) (interchain with G-Cter in SUMO2) cross-link involves residue Lys-135. Residue Ser-167 is modified to Phosphoserine. Residues 168–180 constitute a DNA-binding region (a.T hook); the sequence is PRKRGRPPKDEKD. Glycyl lysine isopeptide (Lys-Gly) (interchain with G-Cter in SUMO2) cross-links involve residues Lys-176, Lys-179, Lys-201, and Lys-211. The segment at 214–217 is interaction with histone H3; sequence DPHF. Residues 216–225 are interaction with KDM1B; the sequence is HFHHFLLSQT. Glycyl lysine isopeptide (Lys-Gly) (interchain with G-Cter in SUMO2) cross-links involve residues Lys-227, Lys-237, Lys-240, and Lys-269. Positions 261-553 are dehydrogenase domain; it reads GSVTPTDKKI…MSAVYRAYIH (293 aa). 271-285 lines the NAD(+) pocket; the sequence is GFLGLGLMGSGIVSN. Residue Lys-302 forms a Glycyl lysine isopeptide (Lys-Gly) (interchain with G-Cter in SUMO2) linkage. Thr-362 and Lys-505 together coordinate NAD(+). Position 540 is a phosphoserine (Ser-540).

This sequence belongs to the HIBADH-related family. NP60 subfamily. In terms of assembly, homotetramere. Interacts with MAPK14. Interacts with KDM1B at nucleosomes; this interaction stimulates H3K4me1 and H3K4me2 demethylation. Binds to mononucleosomes. Interacts with GATA4; the interaction is required for a synergistic activation of GATA4 target genes transcription.

It localises to the nucleus. The protein localises to the chromosome. Functionally, cytokine-like nuclear factor with chromatin gene reader activity involved in chromatin modification and regulation of gene expression. Acts as a nucleosome-destabilizing factor that is recruited to genes during transcriptional activation. Recognizes and binds histone H3 without a preference for specific epigenetic markers and also binds DNA. Interacts with KDM1B and promotes its histone demethylase activity by facilitating the capture of H3 tails, they form a multifunctional enzyme complex that modifies transcribed chromatin and facilitates Pol II transcription through nucleosomes. Stimulates the acetylation of 'Lys-56' of nucleosomal histone H3 (H3K56ac) by EP300. With GATA4, co-binds a defined set of heart development genes and coregulates their expression during cardiomyocyte differentiation. Regulates p38 MAP kinase activity by mediating stress activation of MAPK14/p38alpha and specifically regulating MAPK14 signaling. Indirectly promotes phosphorylation of MAPK14 and activation of ATF2. The phosphorylation of MAPK14 requires upstream activity of MAP2K4 and MAP2K6. The polypeptide is Cytokine-like nuclear factor N-PAC (GLYR1) (Bos taurus (Bovine)).